We begin with the raw amino-acid sequence, 266 residues long: Glucosamine-6-phosphate deaminase (266 aa).

The active-site Proton acceptor; for enolization step is D72. The active-site For ring-opening step is D141. The active-site Proton acceptor; for ring-opening step is the H143. The active-site For ring-opening step is the E148.

It belongs to the glucosamine/galactosamine-6-phosphate isomerase family. NagB subfamily. As to quaternary structure, homohexamer.

The enzyme catalyses alpha-D-glucosamine 6-phosphate + H2O = beta-D-fructose 6-phosphate + NH4(+). The protein operates within amino-sugar metabolism; N-acetylneuraminate degradation; D-fructose 6-phosphate from N-acetylneuraminate: step 5/5. With respect to regulation, allosterically activated by N-acetylglucosamine 6-phosphate (GlcNAc6P). In terms of biological role, catalyzes the reversible isomerization-deamination of glucosamine 6-phosphate (GlcN6P) to form fructose 6-phosphate (Fru6P) and ammonium ion. This is Glucosamine-6-phosphate deaminase from Yersinia pestis bv. Antiqua (strain Antiqua).